We begin with the raw amino-acid sequence, 201 residues long: Putative manganese efflux pump MntP (201 aa).

Helical transmembrane passes span 3–23 (LVSIILISIGLSMDAFAVSIT), 39–59 (IGLFFGGFQALMPLIGWSIGI), 65–85 (IAALDHWIALILLSIIGGKMI), 116–136 (LTLLAIATSIDALAIGVSFAF), 141–161 (IINTIIIIGSITFVICFIGVM), and 176–196 (ILGGIVLIFIGIKIFIEHTNI).

This sequence belongs to the MntP (TC 9.B.29) family.

The protein resides in the cell membrane. In terms of biological role, probably functions as a manganese efflux pump. The chain is Putative manganese efflux pump MntP from Clostridium botulinum (strain Loch Maree / Type A3).